The primary structure comprises 418 residues: Glutamyl-tRNA reductase (418 aa).

Residues 49–52, Ser-109, 114–116, and Gln-120 each bind substrate; these read TCNR and EPQ. The active-site Nucleophile is Cys-50. NADP(+) is bound at residue 189–194; sequence GAGETI.

Belongs to the glutamyl-tRNA reductase family. In terms of assembly, homodimer.

It carries out the reaction (S)-4-amino-5-oxopentanoate + tRNA(Glu) + NADP(+) = L-glutamyl-tRNA(Glu) + NADPH + H(+). Its pathway is porphyrin-containing compound metabolism; protoporphyrin-IX biosynthesis; 5-aminolevulinate from L-glutamyl-tRNA(Glu): step 1/2. Catalyzes the NADPH-dependent reduction of glutamyl-tRNA(Glu) to glutamate 1-semialdehyde (GSA). In Citrobacter koseri (strain ATCC BAA-895 / CDC 4225-83 / SGSC4696), this protein is Glutamyl-tRNA reductase.